A 314-amino-acid polypeptide reads, in one-letter code: MSTVYYPSVILKKSPLPLKLTPARASGNFGTPITAALQRASFNITIITRTESSSTFPAGLPIIRTSYTLENLTTALAGQDAAICVVGPGGIGAQVLMIEAAEAAGVKRFIVDDFGWGPGFRNLPEFRAIHAHRRAGWELAKAKAQANPNFTFTGITSGNPIDWAMKRFPLMGFDIARCSAIIYDSGTEKFTATTLAGIGQSVVGVLQHPDETANRFVKVLSIITNQNELLEAFQRVTGRQWPVQRASAQTLIESGQQKFQAGMGGWVLELVVAQMYDEGEARCVMAPSWEASDSPLLGVKKESADEVVAKVLQL.

This sequence belongs to the NmrA-type oxidoreductase family. Isoflavone reductase subfamily.

The protein operates within secondary metabolite biosynthesis. Functionally, oxidoreductase; part of the gene cluster that mediates the biosynthesis of oxaleimides, cytotoxic compounds containing an unusual disubstituted succinimide moiety. The first step of the pathway is provided by the HR-PKS poxF that serves in a new mode of collaborative biosynthesis with the PKS-NRPS poxE, by providing the olefin containing amino acid substrate via the synthesis of an ACP-bound dec-4-enoate. The cytochrome P450 monooxygenase poxM-catalyzed oxidation at the alpha-position creates the enzyme-bound 2-hydroxydec-4-enoyl-ACP thioester, which may be prone to spontaneous hydrolysis to yield 2-hydroxydec-4-enoic acid due to increased electrophilicity of the carbonyl. 2-hydroxydec-4-enoic acid can then be further oxidized by poxM to yield the alpha-ketoacid 2-oxodec-4-enoicacid, which is reductively aminated by the aminotransferase poxL to yield (S,E)-2-aminodec-4-enoic acid. The Hybrid PKS-NRPS synthetase poxE then performs condensation between the octaketide product of its PKS modules and the amino group of (S,E)-2-aminodec-4-enoic acid which is activated and incorporated by the adenylation domain. The resulting aminoacyl product can be cyclized by the Diels-Alderase PoxQ and reductively released by the reductive (R) domain of poxE to yield an aldehyde intermediate. The released aldehyde is then substrate for a Knoevenagel condensation by the hydrolyase poxO followed by an oxidation at the 5-position of the pyrrolidone ring. The presence of the olefin from the amino acid building block allows for migration of the substituted allyl group to occur. This allylic transposition reaction takes place in a conjugate addition, semipinacol-like fashion to yield a succinimide intermediate. Iterative two-electron oxidations of the C7 methyl of the succinimide intermediate to the carboxylic acid can be catalyzed by one of two remaining cytochrome P450 monooxygenasess poxC or poxD to yield oxaleimide A. Subsequent oxidation yields the maleimide scaffold oxaleimide I. Both oxaleimide A and oxaleimide I can undergo oxidative modifications in the decalin ring to yield the series of products oxaleimides B to H. This is Oxidoreductase poxI from Penicillium oxalicum (strain 114-2 / CGMCC 5302) (Penicillium decumbens).